Here is a 381-residue protein sequence, read N- to C-terminus: Palmitoyltransferase SWF1 (381 aa).

Residues 1–4 (MWLK) lie on the Lumenal side of the membrane. Residues 5-25 (IYLLSILAISVFTFVFLFGAL) traverse the membrane as a helical segment. Residues 26-64 (PQFEDTAVWKFRKWLSNRPAAIRSWDSKYCGGRLSVVGD) are Cytoplasmic-facing. The helical transmembrane segment at 65 to 85 (FCGSVVAPAAPWSVPILYCAF) threads the bilayer. The Lumenal portion of the chain corresponds to 86–107 (TTYMFSAYYEDLHPFIAENHWY). Residues 108–128 (YAWLAPVAYTILVVSFVLATF) form a helical membrane-spanning segment. At 129–201 (SDPGKITKQN…NTVGLYNYRW (73 aa)) the chain is on the cytoplasmic side. The 51-residue stretch at 157–207 (TECSTCKFTKPARSKHDRFTNKCVAKFDHYCLWINNTVGLYNYRWFLFFLL) folds into the DHHC domain. Cys-187 acts as the S-palmitoyl cysteine intermediate in catalysis. A helical membrane pass occupies residues 202 to 222 (FLFFLLGNVWTLCWGALLAGL). The Lumenal portion of the chain corresponds to 223–257 (KMIVMVAAEYKDHPKPLPSIFSQWWQVMITNENKR). The helical transmembrane segment at 258 to 278 (VGIIFLLSVSTGALACAFTAM) threads the bilayer. The Cytoplasmic segment spans residues 279 to 381 (HFYYIYLGAT…KAVMFPNSAY (103 aa)).

It belongs to the DHHC palmitoyltransferase family. SWF1 subfamily.

It is found in the endoplasmic reticulum membrane. It catalyses the reaction L-cysteinyl-[protein] + hexadecanoyl-CoA = S-hexadecanoyl-L-cysteinyl-[protein] + CoA. Functionally, palmitoyltransferase that targets several endosomal SNAREs. Palmitoylates the SNAREs at cysteine residues close to the cytoplasmic end of their transmembrane domain. May have a role in the cellular quality control of transmembrane domain-containing proteins. This is Palmitoyltransferase SWF1 (SWF1) from Yarrowia lipolytica (strain CLIB 122 / E 150) (Yeast).